The sequence spans 131 residues: Sec-independent protein translocase protein TatB (131 aa).

Residues 2-22 (FDGIGFMELLLIGIVGLVVLG) form a helical membrane-spanning segment. Positions 86–95 (LKEAAQSVNR) are enriched in polar residues. The disordered stretch occupies residues 86 to 131 (LKEAAQSVNRPYQVEDVPAAKDVPAKEMPTSETSTATNANSDKPNG). Over residues 115–131 (TSETSTATNANSDKPNG) the composition is skewed to low complexity.

The protein belongs to the TatB family. The Tat system comprises two distinct complexes: a TatABC complex, containing multiple copies of TatA, TatB and TatC subunits, and a separate TatA complex, containing only TatA subunits. Substrates initially bind to the TatABC complex, which probably triggers association of the separate TatA complex to form the active translocon.

The protein resides in the cell inner membrane. Functionally, part of the twin-arginine translocation (Tat) system that transports large folded proteins containing a characteristic twin-arginine motif in their signal peptide across membranes. Together with TatC, TatB is part of a receptor directly interacting with Tat signal peptides. TatB may form an oligomeric binding site that transiently accommodates folded Tat precursor proteins before their translocation. This Shewanella halifaxensis (strain HAW-EB4) protein is Sec-independent protein translocase protein TatB.